The following is a 234-amino-acid chain: Lipoprotein-releasing system ATP-binding protein LolD (234 aa).

The 228-residue stretch at 7 to 234 folds into the ABC transporter domain; that stretch reads LLCNNLCKKY…QDELTVTGAL (228 aa). 43-50 is an ATP binding site; sequence GSSGSGKS.

This sequence belongs to the ABC transporter superfamily. Lipoprotein translocase (TC 3.A.1.125) family. The complex is composed of two ATP-binding proteins (LolD) and two transmembrane proteins (LolC and LolE).

The protein resides in the cell inner membrane. In terms of biological role, part of the ABC transporter complex LolCDE involved in the translocation of mature outer membrane-directed lipoproteins, from the inner membrane to the periplasmic chaperone, LolA. Responsible for the formation of the LolA-lipoprotein complex in an ATP-dependent manner. This chain is Lipoprotein-releasing system ATP-binding protein LolD, found in Photorhabdus laumondii subsp. laumondii (strain DSM 15139 / CIP 105565 / TT01) (Photorhabdus luminescens subsp. laumondii).